We begin with the raw amino-acid sequence, 1303 residues long: Protein STU1 (1303 aa).

Disordered stretches follow at residues 239–259, 531–664, and 953–977; these read RGSD…NTPV, SQRE…GAVS, and EASD…NSEH. The span at 249 to 259 shows a compositional bias: polar residues; that stretch reads RANTPRSNTPV. Positions 554-568 are enriched in basic and acidic residues; that stretch reads SLKEAILEKNKELRQ. Residues 573 to 583 show a composition bias toward polar residues; the sequence is SRNSGEQSTKI. Residues 596 to 609 are compositionally biased toward basic and acidic residues; that stretch reads SRLEKSLLRPDVGH. Polar residues predominate over residues 618–629; the sequence is SSWTYPSTQSGP. Positions 634-648 are enriched in basic and acidic residues; the sequence is KQRERSKTEVHKKSP. Polar residues-rich tracts occupy residues 653–664 and 955–972; these read RPSSRLDTGAVS and SDSS…SSKR.

It belongs to the CLASP family. In terms of assembly, interacts with microtubules.

Its subcellular location is the cytoplasm. The protein localises to the cytoskeleton. The protein resides in the nucleus. It localises to the spindle. In terms of biological role, microtubule binding protein that promotes the stabilization of dynamic microtubules. Required for mitotic spindle formation. The polypeptide is Protein STU1 (STU1) (Candida albicans (strain SC5314 / ATCC MYA-2876) (Yeast)).